The sequence spans 525 residues: Glutamate--cysteine ligase (525 aa).

Belongs to the glutamate--cysteine ligase type 1 family. Type 1 subfamily.

It carries out the reaction L-cysteine + L-glutamate + ATP = gamma-L-glutamyl-L-cysteine + ADP + phosphate + H(+). The protein operates within sulfur metabolism; glutathione biosynthesis; glutathione from L-cysteine and L-glutamate: step 1/2. This Pseudomonas putida (strain ATCC 47054 / DSM 6125 / CFBP 8728 / NCIMB 11950 / KT2440) protein is Glutamate--cysteine ligase.